Here is a 654-residue protein sequence, read N- to C-terminus: NADPH-dependent diflavin oxidoreductase 1 (654 aa).

The region spanning 14 to 166 (ALVLYGSETG…TFIPWITDFR (153 aa)) is the Flavodoxin-like domain. FMN is bound by residues 20–25 (SETGNA), 75–78 (STTG), and 113–122 (LGDSSYPKFN). The FAD-binding FR-type domain maps to 235 to 485 (PDALTATLVE…QLQRGGLSSS (251 aa)). FAD contacts are provided by residues Arg-389, 419-422 (RQFS), and 458-461 (GVCT). NADP(+) is bound by residues Thr-500, 568-569 (SR), and 574-578 (KIYVQ). Trp-654 lines the FAD pocket.

This sequence belongs to the NADPH-dependent diflavin oxidoreductase NDOR1 family. The protein in the N-terminal section; belongs to the flavodoxin family. It in the C-terminal section; belongs to the flavoprotein pyridine nucleotide cytochrome reductase family. Interacts with dre2; as part of the cytosolic iron-sulfur (Fe-S) protein assembly (CIA) machinery. It depends on FAD as a cofactor. The cofactor is FMN.

It is found in the cytoplasm. It localises to the mitochondrion. The catalysed reaction is 2 oxidized [2Fe-2S]-[protein] + NADPH = 2 reduced [2Fe-2S]-[protein] + NADP(+) + H(+). NADPH-dependent reductase which is a central component of the cytosolic iron-sulfur (Fe-S) protein assembly (CIA) machinery. Transfers electrons from NADPH via its FAD and FMN prosthetic groups to the [2Fe-2S] cluster of dre2, another key component of the CIA machinery. In turn, this reduced cluster provides electrons for assembly of cytosolic iron-sulfur cluster proteins. Positively controls H(2)O(2)-induced cell death. This is NADPH-dependent diflavin oxidoreductase 1 from Aspergillus fumigatus (strain ATCC MYA-4609 / CBS 101355 / FGSC A1100 / Af293) (Neosartorya fumigata).